The sequence spans 190 residues: Probable chorismate pyruvate-lyase (190 aa).

Substrate-binding residues include R77, L115, and E174.

Belongs to the UbiC family.

Its subcellular location is the cytoplasm. The enzyme catalyses chorismate = 4-hydroxybenzoate + pyruvate. The protein operates within cofactor biosynthesis; ubiquinone biosynthesis. In terms of biological role, removes the pyruvyl group from chorismate, with concomitant aromatization of the ring, to provide 4-hydroxybenzoate (4HB) for the ubiquinone pathway. The chain is Probable chorismate pyruvate-lyase from Shewanella sp. (strain MR-4).